Consider the following 555-residue polypeptide: Potassium-transporting ATPase potassium-binding subunit (555 aa).

A run of 10 helical transmembrane segments spans residues 2–22 (IWVA…PTGI), 60–80 (QYAL…YFIF), 130–150 (IGIT…VMAF), 173–193 (VFLP…VPQT), 246–266 (MSNI…PFTY), 278–298 (ILFV…TTSE), 374–394 (AGFV…GLMV), 412–432 (LIAV…ALAL), 483–503 (LVMF…AASL), and 525–545 (GIFI…MLVL).

Belongs to the KdpA family. The system is composed of three essential subunits: KdpA, KdpB and KdpC.

The protein resides in the cell membrane. Its function is as follows. Part of the high-affinity ATP-driven potassium transport (or Kdp) system, which catalyzes the hydrolysis of ATP coupled with the electrogenic transport of potassium into the cytoplasm. This subunit binds the extracellular potassium ions and delivers the ions to the membrane domain of KdpB through an intramembrane tunnel. In Bacillus thuringiensis subsp. konkukian (strain 97-27), this protein is Potassium-transporting ATPase potassium-binding subunit.